The sequence spans 142 residues: Small ribosomal subunit protein uS12y (142 aa).

Position 61 is a hydroxyproline (proline 61).

The protein belongs to the universal ribosomal protein uS12 family.

This Arabidopsis thaliana (Mouse-ear cress) protein is Small ribosomal subunit protein uS12y (RPS23B).